The primary structure comprises 86 residues: uncharacterized protein (86 aa).

It to C.jejuni CJ0253.

This is an uncharacterized protein from Helicobacter pylori (strain ATCC 700392 / 26695) (Campylobacter pylori).